The sequence spans 208 residues: Large ribosomal subunit protein uL3 (208 aa).

A disordered region spans residues 123–147 (RHGQSRGPMAHGSRYHRRPGSMGPV).

This sequence belongs to the universal ribosomal protein uL3 family. As to quaternary structure, part of the 50S ribosomal subunit. Forms a cluster with proteins L14 and L19.

In terms of biological role, one of the primary rRNA binding proteins, it binds directly near the 3'-end of the 23S rRNA, where it nucleates assembly of the 50S subunit. The polypeptide is Large ribosomal subunit protein uL3 (Streptococcus sanguinis (strain SK36)).